The sequence spans 280 residues: MTSNSHVKIGIIGGSGLDDPDILEGRTERYVVTPYGKPSDALILGKIKNVDCVLLARHGRQHTIMPTNVNYQANIWALKEEGCTHLLVTTACGSLREDIQPGDIVLIDQFIDRTTKRVQTFYDGQPTSPPGVCHIPMAEPFCSKTREVLLEVAQGLGVKCHTRGTMVTIEGPRFSSRAESLMFRQWGADVINMTTVPEVVLAKEAGLCYASIAMATDYDCWKEHEEAVCVDNVLKTMKENANKASSILLTAIPQICQMDWDSTINAHKSMSQSSVMLPKH.

Residues Ser15, 57–58 (RH), and 90–91 (TA) contribute to the phosphate site. Residue Met193 participates in substrate binding. Thr194 lines the phosphate pocket. 217–219 (DYD) contacts substrate.

It belongs to the PNP/MTAP phosphorylase family. MTAP subfamily. As to quaternary structure, homotrimer.

The protein resides in the cytoplasm. Its subcellular location is the nucleus. The enzyme catalyses S-methyl-5'-thioadenosine + phosphate = 5-(methylsulfanyl)-alpha-D-ribose 1-phosphate + adenine. It functions in the pathway amino-acid biosynthesis; L-methionine biosynthesis via salvage pathway; S-methyl-5-thio-alpha-D-ribose 1-phosphate from S-methyl-5'-thioadenosine (phosphorylase route): step 1/1. Catalyzes the reversible phosphorylation of S-methyl-5'-thioadenosine (MTA) to adenine and 5-methylthioribose-1-phosphate. Involved in the breakdown of MTA, a major by-product of polyamine biosynthesis. Responsible for the first step in the methionine salvage pathway after MTA has been generated from S-adenosylmethionine. Has broad substrate specificity with 6-aminopurine nucleosides as preferred substrates. The protein is S-methyl-5'-thioadenosine phosphorylase (mtap) of Danio rerio (Zebrafish).